Consider the following 879-residue polypeptide: Band 4.1-like protein 1 (879 aa).

A disordered region spans residues 1–64; the sequence is MTTETGPDSE…RPAEQSLDME (64 aa). Residues 17 to 35 show a composition bias toward low complexity; sequence ETPQQPEAAAAVTTPVTPA. Residue Thr30 is modified to Phosphothreonine. Residues 38-50 are compositionally biased toward basic and acidic residues; sequence SHPETNSNEKHLT. The residue at position 75 (Ser75) is a Phosphoserine. Phosphothreonine is present on Thr79. Residues 97 to 378 enclose the FERM domain; it reads ATCRVTLLDA…EHHTFFRLVS (282 aa). Tyr343 carries the post-translational modification Phosphotyrosine. A phosphoserine mark is found at Ser378, Ser430, Ser437, Ser461, and Ser466. Residues 428-501 form a disordered region; the sequence is SRSLDGAEFS…HKQEFLDKPE (74 aa). A compositionally biased stretch (basic and acidic residues) spans 444–501; the sequence is ENHDAGPDGDKREDDAESGGRRSEAEEGEVRTPTKIKELKPEQETTPRHKQEFLDKPE. Thr475 bears the Phosphothreonine mark. The segment at 483 to 541 is spectrin--actin-binding; it reads KPEQETTPRHKQEFLDKPEDVLLKHQASINELKRTLKEPNSKLIHRDRDWERERRLPSS. A Phosphoserine modification is found at Ser510. Positions 514-538 are enriched in basic and acidic residues; the sequence is LKRTLKEPNSKLIHRDRDWERERRL. 3 disordered regions span residues 514 to 596, 633 to 687, and 718 to 742; these read LKRT…FLKD, FEDF…STPE, and SRVSTADSTQVDGGAPAAKDFMTTP. A phosphoserine mark is found at Ser540, Ser541, Ser544, and Ser546. At Thr550 the chain carries Phosphothreonine. Basic and acidic residues predominate over residues 550-577; that stretch reads TPEKASERAGLREGSEEKVKPPRPRAPE. Phosphoserine is present on residues Ser564 and Ser578. At Thr580 the chain carries Phosphothreonine. Phosphoserine is present on residues Glu583, Gln587, Ser639, Ser648, Ser650, Ser665, Ser666, Asp669, Ser671, Ser677, and Ser684. Over residues 635–650 the composition is skewed to basic and acidic residues; it reads DFSRSLPELDRDKSDS. Phosphothreonine is present on Thr685. Polar residues predominate over residues 718–728; sequence SRVSTADSTQV. A phosphoserine mark is found at Ser721, Pro742, Ala766, Ser782, and Ser868. The segment at 744-879 is C-terminal (CTD); it reads CITTETISTT…EERDKKPQES (136 aa).

As to quaternary structure, interacts with AGAP2. In terms of tissue distribution, highest expression in brain, lower in heart and kidney. Within the brain, highest expression in cerebellum.

The protein localises to the cytoplasm. Its subcellular location is the cytoskeleton. In terms of biological role, may function to confer stability and plasticity to neuronal membrane via multiple interactions, including the spectrin-actin-based cytoskeleton, integral membrane channels and membrane-associated guanylate kinases. The polypeptide is Band 4.1-like protein 1 (Rattus norvegicus (Rat)).